Here is a 290-residue protein sequence, read N- to C-terminus: Festuclavine dehydrogenase easG (290 aa).

The protein belongs to the fgaFS/easG family.

The enzyme catalyses festuclavine + NAD(+) = 6,8-dimethyl-6,7-didehydroergoline + NADH + H(+). It participates in alkaloid biosynthesis; ergot alkaloid biosynthesis. Festuclavine dehydrogenase; part of the gene cluster that mediates the biosynthesis of fumiclavanine C, a fungal ergot alkaloid. DmaW catalyzes the first step of ergot alkaloid biosynthesis by condensing dimethylallyl diphosphate (DMAP) and tryptophan to form 4-dimethylallyl-L-tryptophan. The second step is catalyzed by the methyltransferase easF that methylates 4-dimethylallyl-L-tryptophan in the presence of S-adenosyl-L-methionine, resulting in the formation of 4-dimethylallyl-L-abrine. The catalase easC and the FAD-dependent oxidoreductase easE then transform 4-dimethylallyl-L-abrine to chanoclavine-I which is further oxidized by EasD in the presence of NAD(+), resulting in the formation of chanoclavine-I aldehyde. EasA reduces chanoclavine-I aldehyde to dihydrochanoclavine-I aldehyde that spontaneously dehydrates to form 6,8-dimethyl-6,7-didehydroergoline. EasG then catalyzes the reduction of 6,8-dimethyl-6,7-didehydroergoline to form festuclavine. Hydrolysis of festuclavine by easM then leads to the formation of fumigaclavine B which is in turn acetylated by easN to fumigaclavine A. Finally, easL catalyzes the conversion of fumigaclavine A into fumigaclavine C by attaching a dimethylallyl moiety to C-2 of the indole nucleus. The sequence is that of Festuclavine dehydrogenase easG from Aspergillus fumigatus (strain ATCC MYA-4609 / CBS 101355 / FGSC A1100 / Af293) (Neosartorya fumigata).